The following is a 449-amino-acid chain: Histidinol dehydrogenase (449 aa).

Residues Tyr-135, Gln-199, and Asn-229 each coordinate NAD(+). Substrate contacts are provided by Thr-252, Gln-274, and His-277. Zn(2+) contacts are provided by Gln-274 and His-277. Residues Glu-343 and His-344 each act as proton acceptor in the active site. 4 residues coordinate substrate: His-344, Asp-377, Glu-431, and His-436. A Zn(2+)-binding site is contributed by Asp-377. His-436 lines the Zn(2+) pocket.

The protein belongs to the histidinol dehydrogenase family. Zn(2+) is required as a cofactor.

The catalysed reaction is L-histidinol + 2 NAD(+) + H2O = L-histidine + 2 NADH + 3 H(+). The protein operates within amino-acid biosynthesis; L-histidine biosynthesis; L-histidine from 5-phospho-alpha-D-ribose 1-diphosphate: step 9/9. In terms of biological role, catalyzes the sequential NAD-dependent oxidations of L-histidinol to L-histidinaldehyde and then to L-histidine. The sequence is that of Histidinol dehydrogenase from Corynebacterium diphtheriae (strain ATCC 700971 / NCTC 13129 / Biotype gravis).